The primary structure comprises 777 residues: Mediator of RNA polymerase II transcription subunit 15 (777 aa).

2 disordered regions span residues Met120 to Thr139 and Ser418 to Gln520. A compositionally biased stretch (low complexity) spans Pro420–Pro434. The span at Gln435–Ser448 shows a compositional bias: pro residues. The segment covering Gln449–Pro471 has biased composition (low complexity). Residues Thr500–Gln519 show a composition bias toward polar residues.

This sequence belongs to the Mediator complex subunit 15 family. As to quaternary structure, component of the Mediator complex. Interacts with srebf1 and srebf2. Interacts with smad2, smad3 and smad4.

It localises to the cytoplasm. The protein localises to the nucleus. Its function is as follows. Component of the Mediator complex, a coactivator involved in the regulated transcription of nearly all RNA polymerase II-dependent genes. Mediator functions as a bridge to convey information from gene-specific regulatory proteins to the basal RNA polymerase II transcription machinery. Mediator is recruited to promoters by direct interactions with regulatory proteins and serves as a scaffold for the assembly of a functional preinitiation complex with RNA polymerase II and the general transcription factors. Required for cholesterol-dependent gene regulation. Positively regulates the Nodal signaling pathway. The protein is Mediator of RNA polymerase II transcription subunit 15 (med15) of Xenopus laevis (African clawed frog).